Consider the following 159-residue polypeptide: 6,7-dimethyl-8-ribityllumazine synthase (159 aa).

Residues Phe-23, 61 to 63, and 85 to 87 each bind 5-amino-6-(D-ribitylamino)uracil; these read SFE and AVI. (2S)-2-hydroxy-3-oxobutyl phosphate is bound at residue 90–91; it reads DT. The active-site Proton donor is the His-93. Phe-118 is a 5-amino-6-(D-ribitylamino)uracil binding site. Position 132 (Arg-132) interacts with (2S)-2-hydroxy-3-oxobutyl phosphate.

This sequence belongs to the DMRL synthase family.

The enzyme catalyses (2S)-2-hydroxy-3-oxobutyl phosphate + 5-amino-6-(D-ribitylamino)uracil = 6,7-dimethyl-8-(1-D-ribityl)lumazine + phosphate + 2 H2O + H(+). Its pathway is cofactor biosynthesis; riboflavin biosynthesis; riboflavin from 2-hydroxy-3-oxobutyl phosphate and 5-amino-6-(D-ribitylamino)uracil: step 1/2. Catalyzes the formation of 6,7-dimethyl-8-ribityllumazine by condensation of 5-amino-6-(D-ribitylamino)uracil with 3,4-dihydroxy-2-butanone 4-phosphate. This is the penultimate step in the biosynthesis of riboflavin. This chain is 6,7-dimethyl-8-ribityllumazine synthase, found in Synechococcus sp. (strain RCC307).